A 281-amino-acid polypeptide reads, in one-letter code: Radiation response metalloprotease IrrE (281 aa).

Histidine 82 lines the Zn(2+) pocket. Residue glutamate 83 is part of the active site. Residues histidine 86 and glutamate 113 each contribute to the Zn(2+) site. The tract at residues leucine 262–serine 281 is disordered. Over residues serine 267–serine 281 the composition is skewed to basic and acidic residues.

Interacts with DdrOC.

Its activity is regulated as follows. Protease activity is inhibited by EDTA. Its function is as follows. Plays a central regulatory role in DNA repair and protection pathways in response to radiation stress. Acts as a site-specific metalloprotease that cleaves and inactivates the repressor proteins DdrOC and DdrOP3, resulting in induced expression of genes required for DNA repair and cell survival after exposure to radiation. The polypeptide is Radiation response metalloprotease IrrE (Deinococcus deserti (strain DSM 17065 / CIP 109153 / LMG 22923 / VCD115)).